We begin with the raw amino-acid sequence, 126 residues long: uncharacterized protein (126 aa).

Residues 3 to 23 (NMIVLIIFAAFIIYMIASYVY) form a helical membrane-spanning segment. Residues 39 to 123 (GYRKAQLIDV…GFKKWGGKIK (85 aa)) enclose the Rhodanese domain.

The protein resides in the cell membrane. This is an uncharacterized protein from Bacillus subtilis (strain 168).